A 424-amino-acid chain; its full sequence is MNEPIDPKSFPSQPLSPYIPMHHIGKGPYKTIFNVLSLNRDHIHWEDYLYKHTPCELVANPETNQQVWFKREDYFAPLSCYMNGKQGINGSKLRQAIWLMVEHLKAGGSPDLIHGTVVGSPQSPMATAVSRHFGGKTTTVLGATKPTTCMNHDMVKMSAWFGSEFNFVGSGYNSTIQPRCKKLIEQQNPKAYYLEYGITLDHTLHSPERIAGFHMLGGEQVANIPDHITDLIIPAGSCNSCTSILTGLAMHPKPNLKNVYLIGIGPNRLDFIESRLRIIGKQANLPHITDFTRCYHDNPDYVYGKKDLQHASKSVSLAGLLMGIREKGESEITLPRFAVHHWDLHTTNWVRYNDLMDYQWGDIELHPRYEGKVMTWIQQHKPELLNENTLFWIVGSKPYIEPMKAACPELSMPEQVPVNEFTPD.

Belongs to the pyridoxal-phosphate-dependent aminodecarboxylase family.

It catalyses the reaction 5-O-(L-seryl)-dTMP in DNA + H(+) = 5-aminoethoxy-methyl-dUMP in DNA + CO2. Converts 5-O-serinylthymidine (O-SerT) into 5-aminoethoxy-2'-deoxymethyluridine (5-NeOmdU) as a step in the pathway leading to thymidine hypermodifications in the viral genome. As a final result of the pathway of hypermodification, 5-NeOmdU substitutes for about 40% of the thymidines in the viral DNA. These modifications probably prevent degradation of viral genome by the host restriction-modification antiviral defense system. In Salmonella phage ViI, this protein is O-seryl-dTMP PLP-dependent decarboxylase.